The chain runs to 262 residues: Tryptophan synthase alpha chain (262 aa).

Active-site proton acceptor residues include E49 and D60.

The protein belongs to the TrpA family. Tetramer of two alpha and two beta chains.

It carries out the reaction (1S,2R)-1-C-(indol-3-yl)glycerol 3-phosphate + L-serine = D-glyceraldehyde 3-phosphate + L-tryptophan + H2O. The protein operates within amino-acid biosynthesis; L-tryptophan biosynthesis; L-tryptophan from chorismate: step 5/5. Functionally, the alpha subunit is responsible for the aldol cleavage of indoleglycerol phosphate to indole and glyceraldehyde 3-phosphate. The polypeptide is Tryptophan synthase alpha chain (Thermoanaerobacter sp. (strain X514)).